The chain runs to 544 residues: 4-coumarate--CoA ligase 1 (544 aa).

Serine 190, serine 191, glycine 192, threonine 193, threonine 194, and lysine 198 together coordinate ATP. Position 240 (tyrosine 240) interacts with (E)-4-coumaroyl-AMP. A CoA-binding site is contributed by lysine 261. An SBD1 region spans residues 263–332 (DIVPFLELIQ…AKFPNAKLGQ (70 aa)). Residues alanine 310, glutamine 332, glycine 333, threonine 337, and methionine 345 each contribute to the (E)-4-coumaroyl-AMP site. Glutamine 332, glycine 333, and threonine 337 together coordinate ATP. Positions 333–400 (GYGMTEAGPV…IRGDQIMKGY (68 aa)) are SBD2. Positions 421 and 436 each coordinate ATP. (E)-4-coumaroyl-AMP is bound by residues lysine 438 and lysine 442. Lysine 444 and glycine 445 together coordinate CoA. Residue lysine 527 coordinates ATP.

This sequence belongs to the ATP-dependent AMP-binding enzyme family. Requires Mg(2+) as cofactor.

The enzyme catalyses (E)-4-coumarate + ATP + CoA = (E)-4-coumaroyl-CoA + AMP + diphosphate. It catalyses the reaction (E)-4-coumarate + ATP + H(+) = (E)-4-coumaroyl-AMP + diphosphate. The catalysed reaction is (E)-4-coumaroyl-AMP + CoA = (E)-4-coumaroyl-CoA + AMP + H(+). It participates in phytoalexin biosynthesis; 3,4',5-trihydroxystilbene biosynthesis; 3,4',5-trihydroxystilbene from trans-4-coumarate: step 1/2. Carboxylate--CoA ligase that may use 4-coumarate as substrate. Follows a two-step reaction mechanism, wherein the carboxylate substrate first undergoes adenylation by ATP, followed by a thioesterification in the presence of CoA to yield the final CoA thioester. This chain is 4-coumarate--CoA ligase 1 (4CL1), found in Petroselinum crispum (Parsley).